Reading from the N-terminus, the 405-residue chain is Putative colanic acid biosynthesis glycosyl transferase WcaC (405 aa).

It functions in the pathway slime biogenesis; slime polysaccharide biosynthesis. This is Putative colanic acid biosynthesis glycosyl transferase WcaC (wcaC) from Escherichia coli (strain K12).